The primary structure comprises 285 residues: Energy-coupling factor transporter ATP-binding protein EcfA1 (285 aa).

Residues 9–246 (VTVEHLSFTY…VSLIKNAGLD (238 aa)) form the ABC transporter domain. ATP is bound at residue 43–50 (GHNGSGKS).

This sequence belongs to the ABC transporter superfamily. Energy-coupling factor EcfA family. Forms a stable energy-coupling factor (ECF) transporter complex composed of 2 membrane-embedded substrate-binding proteins (S component), 2 ATP-binding proteins (A component) and 2 transmembrane proteins (T component).

It localises to the cell membrane. ATP-binding (A) component of a common energy-coupling factor (ECF) ABC-transporter complex. Unlike classic ABC transporters this ECF transporter provides the energy necessary to transport a number of different substrates. The sequence is that of Energy-coupling factor transporter ATP-binding protein EcfA1 from Lactobacillus gasseri (strain ATCC 33323 / DSM 20243 / BCRC 14619 / CIP 102991 / JCM 1131 / KCTC 3163 / NCIMB 11718 / NCTC 13722 / AM63).